A 1019-amino-acid chain; its full sequence is Probable LRR receptor-like serine/threonine-protein kinase At1g29720 (1019 aa).

The first 19 residues, 1 to 19 (MSIILWSFFLFFTIILSSL), serve as a signal peptide directing secretion. At 20–615 (TNITTLASFS…EKTKHHIKYP (596 aa)) the chain is on the extracellular side. N-linked (GlcNAc...) asparagine glycans are attached at residues Asn21, Asn79, and Asn90. LRR repeat units follow at residues 93 to 117 (ICRITELALKTMSLRGKLPPELTKL), 118 to 141 (PYLKSIELCRNYLSGTIPMEWAKM), 143 to 165 (YLTSISVCANNLSGNLPAGLQNF), 166 to 189 (KNLTFLGVEGNQFSGPIPDELGNL), 190 to 212 (TSLTGLELASNKFTGILPGTLAR), 214 to 236 (VNLERVRICDNNFTGIIPAYIGN), 237 to 261 (WTRLQKLHLYASGLTGPIPDAVVRL), 263 to 283 (NLLELSLSDTTGIKSFPNLSS), 284 to 307 (KGLKRLILRNVGLSGPIPSYIWNL), 308 to 330 (TDLKILDLSFNKLNGIVQGVQNP), 332 to 351 (KNIYLTGNLLSGNIESGGLL), 352 to 374 (NSQSYIDLSYNNFSWSSSCQKGS), and 375 to 398 (TINTYQSSYSKNNLTGLPPCAVPA). 3 N-linked (GlcNAc...) asparagine glycosylation sites follow: Asn153, Asn167, and Asn188. Residues Asn225 and Asn236 are each glycosylated (N-linked (GlcNAc...) asparagine). 2 N-linked (GlcNAc...) asparagine glycosylation sites follow: Asn280 and Asn306. N-linked (GlcNAc...) asparagine glycosylation is found at Asn363, Asn387, Asn469, and Asn558. A helical membrane pass occupies residues 616–636 (LILGASGALVTIVLLAVGIYA). The Cytoplasmic portion of the chain corresponds to 637-1019 (RGIYRRDNNR…STVENSSSSL (383 aa)). The Protein kinase domain occupies 673-946 (FDQANKLGEG…EAVKMLEGEI (274 aa)). ATP is bound by residues 679-687 (LGEGGFGSV) and Lys701. Residue Tyr746 is modified to Phosphotyrosine. Catalysis depends on Asp797, which acts as the Proton acceptor. Ser830 carries the phosphoserine modification. Residues Thr831 and Thr836 each carry the phosphothreonine modification. A Phosphotyrosine modification is found at Tyr844.

Belongs to the protein kinase superfamily. Ser/Thr protein kinase family.

The protein localises to the cell membrane. The enzyme catalyses L-seryl-[protein] + ATP = O-phospho-L-seryl-[protein] + ADP + H(+). It catalyses the reaction L-threonyl-[protein] + ATP = O-phospho-L-threonyl-[protein] + ADP + H(+). This is Probable LRR receptor-like serine/threonine-protein kinase At1g29720 (RFK1) from Arabidopsis thaliana (Mouse-ear cress).